We begin with the raw amino-acid sequence, 531 residues long: NAD(P)H-quinone oxidoreductase chain 4 (531 aa).

14 helical membrane passes run 9-29 (FPWL…IPFF), 41-61 (FALS…INGF), 93-113 (MPLI…AWPV), 117-137 (PKLF…VFAV), 141-161 (LLFF…LAIW), 173-193 (FIIY…AMGF), 217-237 (IFCY…VPLH), 248-268 (TAPV…YALL), 282-302 (FAPL…LTSF), 311-331 (IAYS…SFSS), 337-357 (AMLQ…LVGA), 381-401 (FALW…SGFV), 422-442 (VVMA…LLSM), and 469-489 (VYII…PRLV).

The protein belongs to the complex I subunit 4 family.

The protein resides in the cellular thylakoid membrane. It catalyses the reaction a plastoquinone + NADH + (n+1) H(+)(in) = a plastoquinol + NAD(+) + n H(+)(out). The enzyme catalyses a plastoquinone + NADPH + (n+1) H(+)(in) = a plastoquinol + NADP(+) + n H(+)(out). Functionally, NDH-1 shuttles electrons from NAD(P)H, via FMN and iron-sulfur (Fe-S) centers, to quinones in the respiratory chain. The immediate electron acceptor for the enzyme in this species is believed to be plastoquinone. Couples the redox reaction to proton translocation (for every two electrons transferred, four hydrogen ions are translocated across the cytoplasmic membrane), and thus conserves the redox energy in a proton gradient. The polypeptide is NAD(P)H-quinone oxidoreductase chain 4 (Prochlorococcus marinus (strain MIT 9301)).